The chain runs to 342 residues: L-threonine 3-dehydrogenase (342 aa).

C38 serves as a coordination point for Zn(2+). Active-site charge relay system residues include T40 and H43. Residues H63, E64, C93, C96, C99, and C107 each coordinate Zn(2+). Residues I175, D195, R200, 262–264 (LGI), and 286–287 (IY) each bind NAD(+).

Belongs to the zinc-containing alcohol dehydrogenase family. As to quaternary structure, homotetramer. Requires Zn(2+) as cofactor.

It localises to the cytoplasm. It carries out the reaction L-threonine + NAD(+) = (2S)-2-amino-3-oxobutanoate + NADH + H(+). It participates in amino-acid degradation; L-threonine degradation via oxydo-reductase pathway; glycine from L-threonine: step 1/2. In terms of biological role, catalyzes the NAD(+)-dependent oxidation of L-threonine to 2-amino-3-ketobutyrate. In Aeromonas salmonicida (strain A449), this protein is L-threonine 3-dehydrogenase.